The primary structure comprises 300 residues: NAD kinase (300 aa).

Asp75 acts as the Proton acceptor in catalysis. NAD(+)-binding positions include 75-76 (DG), 149-150 (ND), Arg177, Asp179, 190-195 (TAYALS), Ala214, and Gln248.

Belongs to the NAD kinase family. It depends on a divalent metal cation as a cofactor.

It is found in the cytoplasm. It catalyses the reaction NAD(+) + ATP = ADP + NADP(+) + H(+). In terms of biological role, involved in the regulation of the intracellular balance of NAD and NADP, and is a key enzyme in the biosynthesis of NADP. Catalyzes specifically the phosphorylation on 2'-hydroxyl of the adenosine moiety of NAD to yield NADP. This Burkholderia cenocepacia (strain ATCC BAA-245 / DSM 16553 / LMG 16656 / NCTC 13227 / J2315 / CF5610) (Burkholderia cepacia (strain J2315)) protein is NAD kinase.